The following is a 269-amino-acid chain: Phosphate import ATP-binding protein PstB (269 aa).

The ABC transporter domain occupies isoleucine 22–isoleucine 264. Glycine 55–serine 62 contacts ATP.

Belongs to the ABC transporter superfamily. Phosphate importer (TC 3.A.1.7) family. In terms of assembly, the complex is composed of two ATP-binding proteins (PstB), two transmembrane proteins (PstC and PstA) and a solute-binding protein (PstS).

The protein resides in the cell membrane. The enzyme catalyses phosphate(out) + ATP + H2O = ADP + 2 phosphate(in) + H(+). Functionally, part of the ABC transporter complex PstSACB involved in phosphate import. Responsible for energy coupling to the transport system. This is Phosphate import ATP-binding protein PstB from Spiroplasma kunkelii.